We begin with the raw amino-acid sequence, 159 residues long: MTRMIIQNSGSWTLCGAVLLFVLPLIPTPEALQHTEEGLEMLFRERSQSDWENVWHQETHSRCRDKLVRQLYWACEKDIYRLTRRNKKRTGNDEAWIKKTTTEPDGSTWLHVNYANMFLRSRRSDGNTPSISNECCTKAGCTWEEYAEYCPSNKRRNHY.

Residues 1–31 form the signal peptide; that stretch reads MTRMIIQNSGSWTLCGAVLLFVLPLIPTPEA. Intrachain disulfides connect cysteine 63–cysteine 136, cysteine 75–cysteine 150, and cysteine 135–cysteine 141. A propeptide spans 90–121 (connecting peptide); the sequence is TGNDEAWIKKTTTEPDGSTWLHVNYANMFLRS.

Belongs to the insulin family. In terms of assembly, heterodimer of a B chain and an A chain linked by two disulfide bonds. Broadly expressed at a low level throughout the embryo, except the yolk. Expressed at a moderate level in the embryonic midgut. Larval expression is restricted to ten cells of the ventral nerve cord - in four pairs of centrally located cells in the most posterior abdominal segments and in one pair of dorsally located cells in the A1 or A2 segments.

The protein resides in the secreted. Possible ligand of InR/insulin-like receptor. In Drosophila melanogaster (Fruit fly), this protein is Insulin-like peptide 7.